The sequence spans 246 residues: Transcriptional regulatory protein LytR (246 aa).

One can recognise a Response regulatory domain in the interval 2–116 (KALIIDDEPL…RIEQAVNKVR (115 aa)). 4-aspartylphosphate is present on D53. In terms of domain architecture, HTH LytTR-type spans 141–245 (LPVEIDDKIH…MKDFKASIGL (105 aa)).

In terms of assembly, homodimer; when phosphorylated. In terms of processing, phosphorylated and dephosphorylated by LytS.

Its subcellular location is the cytoplasm. In terms of biological role, member of the two-component regulatory system LytR/LytS that regulates genes involved in autolysis, programmed cell death, biofilm formation and cell wall metabolism. Also participates in sensing and responding to host defense cationic antimicrobial peptides (HDPs). Upon phosphorylation by LytS, functions as a transcription regulator by direct binding to promoter regions of target genes including lrgA and lrgB, to positively regulate their expression. In Staphylococcus aureus (strain USA300), this protein is Transcriptional regulatory protein LytR (lytR).